We begin with the raw amino-acid sequence, 445 residues long: Argininosuccinate synthase (445 aa).

Residues A17–S25 and A43 each bind ATP. Y99 lines the L-citrulline pocket. ATP is bound by residues G129 and T131. Residues T131, N135, and D136 each coordinate L-aspartate. N135 serves as a coordination point for L-citrulline. D136 is a binding site for ATP. The L-citrulline site is built by R139 and S192. D194 lines the ATP pocket. The L-citrulline site is built by T201, E203, and E280.

Belongs to the argininosuccinate synthase family. Type 2 subfamily. Homotetramer.

It is found in the cytoplasm. The catalysed reaction is L-citrulline + L-aspartate + ATP = 2-(N(omega)-L-arginino)succinate + AMP + diphosphate + H(+). It functions in the pathway amino-acid biosynthesis; L-arginine biosynthesis; L-arginine from L-ornithine and carbamoyl phosphate: step 2/3. This is Argininosuccinate synthase from Polaromonas naphthalenivorans (strain CJ2).